A 332-amino-acid chain; its full sequence is Cell growth regulator with RING finger domain protein 1 (332 aa).

The RING-type zinc finger occupies 274 to 309; that stretch reads CVVCQNGTVNWVLLPCRHTCLCDGCVKYFQQCPMCR.

In terms of tissue distribution, ubiquitously expressed with high expression in testis and the cerebellum.

The protein localises to the nucleus. The protein resides in the endoplasmic reticulum. Its function is as follows. Able to inhibit growth in several cell lines. The polypeptide is Cell growth regulator with RING finger domain protein 1 (CGRRF1) (Homo sapiens (Human)).